Consider the following 219-residue polypeptide: 2-hydroxy-3-keto-5-methylthiopentenyl-1-phosphate phosphatase (219 aa).

This sequence belongs to the HAD-like hydrolase superfamily. MtnX family.

The catalysed reaction is 2-hydroxy-5-methylsulfanyl-3-oxopent-1-enyl phosphate + H2O = 1,2-dihydroxy-5-(methylsulfanyl)pent-1-en-3-one + phosphate. It participates in amino-acid biosynthesis; L-methionine biosynthesis via salvage pathway; L-methionine from S-methyl-5-thio-alpha-D-ribose 1-phosphate: step 4/6. Functionally, dephosphorylates 2-hydroxy-3-keto-5-methylthiopentenyl-1-phosphate (HK-MTPenyl-1-P) yielding 1,2-dihydroxy-3-keto-5-methylthiopentene (DHK-MTPene). This Bacillus cereus (strain B4264) protein is 2-hydroxy-3-keto-5-methylthiopentenyl-1-phosphate phosphatase.